The chain runs to 84 residues: uncharacterized protein (84 aa).

This is an uncharacterized protein from Caenorhabditis elegans.